The following is a 173-amino-acid chain: Disulfide bond formation protein B (173 aa).

Topologically, residues 1–11 (MNALQWSFRAQ) are cytoplasmic. Residues 12–28 (CLTGFLFCTGLLAYAIF) form a helical membrane-spanning segment. Over 29–46 (LQLHQGLEPCPLCIFQRI) the chain is Periplasmic. Residues Cys38 and Cys41 are joined by a disulfide bond. Residues 47–63 (AFAVLGILFLIAGLYNS) form a helical membrane-spanning segment. Residues 64–70 (SNVYTRK) are Cytoplasmic-facing. A helical transmembrane segment spans residues 71 to 88 (AYGLLIFLTAAIGTGIAG). Residues 89–145 (RHVWVQLMPHNTISSCGSPLSFLSETMGPFEVFRTVLTGTSDCGNIDWRFLGLSMPM) lie on the Periplasmic side of the membrane. A disulfide bridge links Cys104 with Cys131. The chain crosses the membrane as a helical span at residues 146–164 (WSMFWFVALALLGLLVGFK). Residues 165-173 (AERRKPLFS) lie on the Cytoplasmic side of the membrane.

The protein belongs to the DsbB family.

It is found in the cell inner membrane. In terms of biological role, required for disulfide bond formation in some periplasmic proteins. Acts by oxidizing the DsbA protein. This Xylella fastidiosa (strain 9a5c) protein is Disulfide bond formation protein B.